The chain runs to 96 residues: Co-chaperonin GroES (96 aa).

The protein belongs to the GroES chaperonin family. In terms of assembly, heptamer of 7 subunits arranged in a ring. Interacts with the chaperonin GroEL.

It localises to the cytoplasm. In terms of biological role, together with the chaperonin GroEL, plays an essential role in assisting protein folding. The GroEL-GroES system forms a nano-cage that allows encapsulation of the non-native substrate proteins and provides a physical environment optimized to promote and accelerate protein folding. GroES binds to the apical surface of the GroEL ring, thereby capping the opening of the GroEL channel. In Polynucleobacter necessarius subsp. necessarius (strain STIR1), this protein is Co-chaperonin GroES.